Reading from the N-terminus, the 257-residue chain is MLAKRIIPCLDVRDGQVVKGVQFRNHEIIGDIVPLAKRYAEEGADELVFYDITASSDGRTVDKSWVERVAQVIDIPFCVAGGIKTIEDAEKLFAFGADKISINSPALADPNLITALADRFGVQAVVVGIDSWFEKETGKYWVNQYTGDEKRTRQTNWQLLDWVQEVQKRGAGEIVLNMMNQDGVRNGYDLTQLKLVREVCNVPLIASGGAGEMVHFRDAFTQANVDGALAASVFHKRIIEIGELKEYLYAEGVEIRR.

Active-site residues include Asp-11 and Asp-130.

This sequence belongs to the HisA/HisF family. As to quaternary structure, heterodimer of HisH and HisF.

The protein localises to the cytoplasm. It catalyses the reaction 5-[(5-phospho-1-deoxy-D-ribulos-1-ylimino)methylamino]-1-(5-phospho-beta-D-ribosyl)imidazole-4-carboxamide + L-glutamine = D-erythro-1-(imidazol-4-yl)glycerol 3-phosphate + 5-amino-1-(5-phospho-beta-D-ribosyl)imidazole-4-carboxamide + L-glutamate + H(+). Its pathway is amino-acid biosynthesis; L-histidine biosynthesis; L-histidine from 5-phospho-alpha-D-ribose 1-diphosphate: step 5/9. Its function is as follows. IGPS catalyzes the conversion of PRFAR and glutamine to IGP, AICAR and glutamate. The HisF subunit catalyzes the cyclization activity that produces IGP and AICAR from PRFAR using the ammonia provided by the HisH subunit. The protein is Imidazole glycerol phosphate synthase subunit HisF of Actinobacillus pleuropneumoniae serotype 7 (strain AP76).